The primary structure comprises 418 residues: CCA-adding enzyme (418 aa).

ATP is bound by residues S54 and R57. Residues S54 and R57 each coordinate CTP. Mg(2+) is bound by residues D66, D68, and D118. H141, K161, and Y170 together coordinate ATP. CTP contacts are provided by H141, K161, and Y170.

It belongs to the tRNA nucleotidyltransferase/poly(A) polymerase family. Archaeal CCA-adding enzyme subfamily. As to quaternary structure, homodimer. Mg(2+) serves as cofactor.

It carries out the reaction a tRNA precursor + 2 CTP + ATP = a tRNA with a 3' CCA end + 3 diphosphate. The enzyme catalyses a tRNA with a 3' CCA end + 2 CTP + ATP = a tRNA with a 3' CCACCA end + 3 diphosphate. In terms of biological role, catalyzes the addition and repair of the essential 3'-terminal CCA sequence in tRNAs without using a nucleic acid template. Adds these three nucleotides in the order of C, C, and A to the tRNA nucleotide-73, using CTP and ATP as substrates and producing inorganic pyrophosphate. tRNA 3'-terminal CCA addition is required both for tRNA processing and repair. Also involved in tRNA surveillance by mediating tandem CCA addition to generate a CCACCA at the 3' terminus of unstable tRNAs. While stable tRNAs receive only 3'-terminal CCA, unstable tRNAs are marked with CCACCA and rapidly degraded. This Pyrobaculum islandicum (strain DSM 4184 / JCM 9189 / GEO3) protein is CCA-adding enzyme.